Consider the following 374-residue polypeptide: Quinolinate synthase (374 aa).

Iminosuccinate is bound by residues His53 and Ser70. Residue Cys116 coordinates [4Fe-4S] cluster. Iminosuccinate contacts are provided by residues 148–150 (YMN) and Ser169. [4Fe-4S] cluster is bound at residue Cys236. Iminosuccinate contacts are provided by residues 262–264 (HPE) and Thr279. Cys327 contacts [4Fe-4S] cluster.

The protein belongs to the quinolinate synthase family. Type 3 subfamily. [4Fe-4S] cluster is required as a cofactor.

It is found in the cytoplasm. The enzyme catalyses iminosuccinate + dihydroxyacetone phosphate = quinolinate + phosphate + 2 H2O + H(+). The protein operates within cofactor biosynthesis; NAD(+) biosynthesis; quinolinate from iminoaspartate: step 1/1. Catalyzes the condensation of iminoaspartate with dihydroxyacetone phosphate to form quinolinate. The chain is Quinolinate synthase from Halobacterium salinarum (strain ATCC 29341 / DSM 671 / R1).